Reading from the N-terminus, the 106-residue chain is Small ribosomal subunit protein bS16 (106 aa).

This sequence belongs to the bacterial ribosomal protein bS16 family.

In Wolbachia pipientis wMel, this protein is Small ribosomal subunit protein bS16.